Reading from the N-terminus, the 567-residue chain is Oxygen-dependent choline dehydrogenase (567 aa).

Position 4–33 (4–33 (DYIIIGAGSAGNVLAARLTEDADVTVLLLE)) interacts with FAD. Histidine 473 functions as the Proton acceptor in the catalytic mechanism.

This sequence belongs to the GMC oxidoreductase family. FAD serves as cofactor.

It carries out the reaction choline + A = betaine aldehyde + AH2. The catalysed reaction is betaine aldehyde + NAD(+) + H2O = glycine betaine + NADH + 2 H(+). It functions in the pathway amine and polyamine biosynthesis; betaine biosynthesis via choline pathway; betaine aldehyde from choline (cytochrome c reductase route): step 1/1. In terms of biological role, involved in the biosynthesis of the osmoprotectant glycine betaine. Catalyzes the oxidation of choline to betaine aldehyde and betaine aldehyde to glycine betaine at the same rate. This Yersinia pestis (strain Pestoides F) protein is Oxygen-dependent choline dehydrogenase.